Consider the following 261-residue polypeptide: Ribosome biogenesis protein nsa2 (261 aa).

Basic and acidic residues-rich tracts occupy residues 1 to 36 and 66 to 82; these read MPQN…HKQS and KQHE…EKDP. Disordered stretches follow at residues 1–44 and 64–97; these read MPQN…NLRG and AIKQ…SNPT. Residues 15–22 carry the Nuclear localization signal motif; that stretch reads GKRLDTEE.

Belongs to the eukaryotic ribosomal protein eS8 family. Ribosome biogenesis protein NSA2 subfamily. In terms of assembly, component of the pre-66S ribosomal particle. Interacts with nop7 and rrp1. Interacts with rsa4 (via WD repeats).

Its subcellular location is the nucleus. The protein resides in the nucleolus. Its function is as follows. Involved in the biogenesis of the 60S ribosomal subunit. May play a part in the quality control of pre-60S particles. This chain is Ribosome biogenesis protein nsa2 (rbg-52), found in Neurospora crassa (strain ATCC 24698 / 74-OR23-1A / CBS 708.71 / DSM 1257 / FGSC 987).